Here is a 250-residue protein sequence, read N- to C-terminus: MANQKQTTHFGFKSVDWNEKEKKVAEVFHSVAKNYDRMNDLMSLGIHHLWKRYTIELSHVRPGQSVLDLAGGSGDLTRLLSQKVGNSGQVILADINAAMLHVGRDRLLDEGLFKNIRYVQGNAQCLPFADNSFHCITMGFGLRNVTDKDEALQSMYRVCKPGGKLMVLEFSTPVFPGLKPVYDWYSFNILPKIGKFVANDEASYQYLAESIRMHPDQETLKAMIERVGFEDCHYHNLSGGIVALHIAYKY.

S-adenosyl-L-methionine-binding positions include Ser73, Asp94, and 122–123; that span reads NA.

Belongs to the class I-like SAM-binding methyltransferase superfamily. MenG/UbiE family.

It carries out the reaction a 2-demethylmenaquinol + S-adenosyl-L-methionine = a menaquinol + S-adenosyl-L-homocysteine + H(+). The catalysed reaction is a 2-methoxy-6-(all-trans-polyprenyl)benzene-1,4-diol + S-adenosyl-L-methionine = a 5-methoxy-2-methyl-3-(all-trans-polyprenyl)benzene-1,4-diol + S-adenosyl-L-homocysteine + H(+). It functions in the pathway quinol/quinone metabolism; menaquinone biosynthesis; menaquinol from 1,4-dihydroxy-2-naphthoate: step 2/2. The protein operates within cofactor biosynthesis; ubiquinone biosynthesis. In terms of biological role, methyltransferase required for the conversion of demethylmenaquinol (DMKH2) to menaquinol (MKH2) and the conversion of 2-polyprenyl-6-methoxy-1,4-benzoquinol (DDMQH2) to 2-polyprenyl-3-methyl-6-methoxy-1,4-benzoquinol (DMQH2). The chain is Ubiquinone/menaquinone biosynthesis C-methyltransferase UbiE from Legionella pneumophila (strain Corby).